The chain runs to 192 residues: Imidazole glycerol phosphate synthase subunit HisH (192 aa).

The Glutamine amidotransferase type-1 domain maps to 1–192; it reads MIAIIDYGLG…QALKGGFIND (192 aa). The active-site Nucleophile is C77. Residues H169 and E171 contribute to the active site.

In terms of assembly, heterodimer of HisH and HisF.

The protein localises to the cytoplasm. The enzyme catalyses 5-[(5-phospho-1-deoxy-D-ribulos-1-ylimino)methylamino]-1-(5-phospho-beta-D-ribosyl)imidazole-4-carboxamide + L-glutamine = D-erythro-1-(imidazol-4-yl)glycerol 3-phosphate + 5-amino-1-(5-phospho-beta-D-ribosyl)imidazole-4-carboxamide + L-glutamate + H(+). It carries out the reaction L-glutamine + H2O = L-glutamate + NH4(+). It participates in amino-acid biosynthesis; L-histidine biosynthesis; L-histidine from 5-phospho-alpha-D-ribose 1-diphosphate: step 5/9. Functionally, IGPS catalyzes the conversion of PRFAR and glutamine to IGP, AICAR and glutamate. The HisH subunit catalyzes the hydrolysis of glutamine to glutamate and ammonia as part of the synthesis of IGP and AICAR. The resulting ammonia molecule is channeled to the active site of HisF. This chain is Imidazole glycerol phosphate synthase subunit HisH, found in Staphylococcus epidermidis (strain ATCC 35984 / DSM 28319 / BCRC 17069 / CCUG 31568 / BM 3577 / RP62A).